The sequence spans 587 residues: Folylpolyglutamate synthase, mitochondrial (587 aa).

A mitochondrion-targeting transit peptide spans 1 to 42 (MSWARTHLRSALSLAAVSARGATTEGAARRWLSAWPAPQEPG). 106-109 (GKGS) lines the ATP pocket. Residues Ser130, Glu200, and His228 each contribute to the Mg(2+) site. 2 residues coordinate ATP: Arg363 and Asp377. The tract at residues 484–508 (PDFLSSPSPEPGRPGSLQPALRPPH) is disordered. Ser539 is subject to Phosphoserine.

The protein belongs to the folylpolyglutamate synthase family. In terms of assembly, monomer. It depends on a monovalent cation as a cofactor.

The protein localises to the mitochondrion inner membrane. Its subcellular location is the mitochondrion matrix. It is found in the cytoplasm. It catalyses the reaction (6S)-5,6,7,8-tetrahydrofolyl-(gamma-L-Glu)(n) + L-glutamate + ATP = (6S)-5,6,7,8-tetrahydrofolyl-(gamma-L-Glu)(n+1) + ADP + phosphate + H(+). It functions in the pathway cofactor biosynthesis; tetrahydrofolylpolyglutamate biosynthesis. Its function is as follows. Catalyzes conversion of folates to polyglutamate derivatives allowing concentration of folate compounds in the cell and the intracellular retention of these cofactors, which are important substrates for most of the folate-dependent enzymes that are involved in one-carbon transfer reactions involved in purine, pyrimidine and amino acid synthesis. The protein is Folylpolyglutamate synthase, mitochondrial (FPGS) of Cricetulus griseus (Chinese hamster).